Consider the following 576-residue polypeptide: Proline--tRNA ligase (576 aa).

The protein belongs to the class-II aminoacyl-tRNA synthetase family. ProS type 1 subfamily. Homodimer.

The protein resides in the cytoplasm. It catalyses the reaction tRNA(Pro) + L-proline + ATP = L-prolyl-tRNA(Pro) + AMP + diphosphate. Catalyzes the attachment of proline to tRNA(Pro) in a two-step reaction: proline is first activated by ATP to form Pro-AMP and then transferred to the acceptor end of tRNA(Pro). As ProRS can inadvertently accommodate and process non-cognate amino acids such as alanine and cysteine, to avoid such errors it has two additional distinct editing activities against alanine. One activity is designated as 'pretransfer' editing and involves the tRNA(Pro)-independent hydrolysis of activated Ala-AMP. The other activity is designated 'posttransfer' editing and involves deacylation of mischarged Ala-tRNA(Pro). The misacylated Cys-tRNA(Pro) is not edited by ProRS. The sequence is that of Proline--tRNA ligase from Bordetella parapertussis (strain 12822 / ATCC BAA-587 / NCTC 13253).